The sequence spans 602 residues: DNA damage-binding protein CMR1 (602 aa).

Residues 35–85 (KEVDNKSFSSPSSQKRRKTTKKPVIKKEISEPSRRSRRIAGIKSELEDPKQ) form a disordered region. Positions 48-58 (QKRRKTTKKPV) are enriched in basic residues. The segment covering 59–68 (IKKEISEPSR) has biased composition (basic and acidic residues). WD repeat units follow at residues 229-270 (ICHN…NDTK), 291-328 (RNVS…STEL), 390-430 (LHDK…KSVY), 446-484 (NSRL…KLDN), 526-569 (GRWV…LAHL), and 571-602 (EQVG…YLFE).

This sequence belongs to the WD repeat DDB2/WDR76 family.

DNA-binding protein that binds to both single- and double-stranded DNA. Binds preferentially to UV-damaged DNA. May be involved in DNA-metabolic processes. The polypeptide is DNA damage-binding protein CMR1 (Candida albicans (strain SC5314 / ATCC MYA-2876) (Yeast)).